A 771-amino-acid chain; its full sequence is MHQHIQVPPLEGKSRINYVNLPLINGDKLRTAKTLVDKAIKEKKVFSVQGPYPVIRAGLRARGWVERRLPRPSFSQPRRHDHETETTDEGDSSDEDDLGEEVERDDEAEDLYDLMSRLVRHETPYFYWTTRRDSVDCRSLRKEQMTNHYAKAGSFTTKVGLCMHLRNLQWFDAADPDTFFPRCYRLGAQDEKHAFIDDFRRTACTSLLLYVLEKYEGDSEGEKMGEVHNAKSHGLRKTRKQHSSQRIETSVIDSALHVCQEYLNSLEHCDIDNNLETNSTISEQQWKVFLQNYYLVVHEGINIEGCEYYLERCKCMLEQMRQVCPQMENDGICNIWIIKPGAKSRGRGIMCMNKLDDMLGLVDGDHCIMKDSKWVVQKYIERPLLVHDTKFDVRQWFLVTDWNPLTVWFYRECYLRFSTQPYSTHTLDSSVHLCNNSIQKHYQPSPDRSPSLPAECMWSCSQFRSWLAASGRAALWKAVVVPGMQKAVIQTLLTAQDSVEPRKASFELYGADFMLGRDLRPWLLEINASPTMAPSTGVTARLCPAVQEDTLRVVLDRRSERNTDTGGFQLIYKQAAVDVPQYVGVNLLIEGTSIRRPRAPVHKSLIQSHPEPLSKSTNHKSSLLSSPCTSGKENQSEEVKRACPNLPNRKITMDQSLIFHPKRKRPHRLVLPSTCCVLPNPTELHHPQRLSHTQPQSDRPHTHRTRSNLPTLYRPTPSVEVINIRPRQALTSSHYIHKIHTVNLSYPVLRMQQNHRRSKNTFAEREGPKSS.

The tract at residues 70-106 (PRPSFSQPRRHDHETETTDEGDSSDEDDLGEEVERDD) is disordered. A compositionally biased stretch (acidic residues) spans 86–106 (TTDEGDSSDEDDLGEEVERDD). In terms of domain architecture, TTL spans 220–566 (EGEKMGEVHN…RRSERNTDTG (347 aa)). ATP is bound by residues Lys339, 345–346 (RG), 377–380 (QKYI), 390–392 (KFD), and 434–435 (CN). Arg345 provides a ligand contact to a protein. Residue Ser437 coordinates L-glutamate. Asp512, Glu525, and Asn527 together coordinate Mg(2+). Glu525 contacts ATP. 2 disordered regions span residues 605–640 (LIQS…EEVK) and 682–713 (TELH…PTLY). The segment covering 614-633 (SKSTNHKSSLLSSPCTSGKE) has biased composition (polar residues).

The cofactor is Mg(2+).

It localises to the cytoplasm. The protein localises to the cytoskeleton. The protein resides in the cell projection. Its subcellular location is the cilium. It is found in the cilium axoneme. It localises to the flagellum axoneme. It catalyses the reaction L-glutamyl-[protein] + glycine + ATP = glycyl-L-glutamyl-[protein] + ADP + phosphate + H(+). Monoglycylase which modifies alpha- and beta-tubulin, adding a single glycine on the gamma-carboxyl groups of specific glutamate residues to generate monoglycine side chains within the C-terminal tail of tubulin. Not involved in elongation step of the polyglycylation reaction. Preferentially glycylates a beta-tail peptide over the alpha-tail, although shifts its preference toward alpha-tail as beta-tail glutamylation increases. Competes with polyglutamylases for modification site on beta-tubulin substrate, thereby creating an anticorrelation between glycylation and glutamylation reactions. Not involved in elongation step of the polyglycylation reaction. The chain is Tubulin monoglycylase TTLL3 (ttll3) from Danio rerio (Zebrafish).